The sequence spans 420 residues: CinA-like protein (420 aa).

It belongs to the CinA family.

The sequence is that of CinA-like protein from Syntrophus aciditrophicus (strain SB).